We begin with the raw amino-acid sequence, 375 residues long: LIM domain-binding protein 1 (375 aa).

2 disordered regions span residues 248–294 (PPAE…TFAL) and 331–375 (DAAN…QASQ). The segment covering 266–282 (SGGSTMSSGGGNTNNSN) has biased composition (low complexity). One can recognise an LIM interaction domain (LID) domain in the interval 300-339 (DVMVVGEPTLMGGEFGDEDERLITRLENTQFDAANGIDDE).

Belongs to the LDB family. In terms of assembly, forms homodimers and heterodimers. Interacts with the LIM domain of LIM/homeobox factor lhx1/lim1, and with lhx3/lim3 and lhx5/lim5. Activates lhx1/lim1 by binding. The stoichiometry of lhx1/lim1 and ldb1 is important for their function and an excess of ldb1 can inhibit lhx1/lim1 function. When bound to lhx1/lim1, escapes degradation by rnf12. The N-terminus interacts with the N-terminal region of rnf12. Post-translationally, undergoes rnf12-mediated ubiquitin-proteasome-dependent degradation. In terms of tissue distribution, ubiquitously expressed in the early gastrula before localizing to the dorsal region of the vegetal hemisphere, which contains the Spemann organizer. Expressed in the CNS, pronephros and tail bud in neurula and tail-bud stage embryos. Expressed in multiple adult tissues including brain, heart, lung, stomach, intestine, liver, spleen, kidney, ovary, muscle and skin.

It is found in the nucleus. Functionally, binds to the LIM domain of a wide variety of LIM domain-containing transcription factors. Acts as a coactivator together with otx2 to stimulate lhx1/lim1-mediated activation of the gsc promoter in the Spemann organizer. Acts synergistically with lhx1/lim1 and ssbp in axis formation. This chain is LIM domain-binding protein 1 (ldb1), found in Xenopus laevis (African clawed frog).